We begin with the raw amino-acid sequence, 1341 residues long: MVYSYTEKKRIRKDFGTRPQVLDIPYLLSIQLDSFEKFIEQDPEGQYGLEAAFRSVFPIQSYNGNSELQYVSYRLGEPVFDVKECQIRGVTYSKPLRVKLRLVIFDKDAPAGTVKDIKEQEVYMGEIPLMTENGTFVINGTERVIVSQLHRSPGVFFDSDKGKTHSSGKVLYNARIIPYRGSWLDFEFDPKDNLYVRIDRRRKLPASIILRALGKTSAEILDIFFEKVNFEVKDQTLMMELVPERLRGETATFDIEADGKVYVEKGRRVTARHIRQLEKDGVNFIEVPVEYIVGKVSAKDYVNEATGELIITANQEISLEALANLSQAGYKKLEVLFTNDLDHGPFMSETLRVDSTTDRISALVEIYRMMRPGEPPTKEAAESLFESLFFSAERYDLSTVGRMKFNSSIGREDAEEQGTLDEVDIIEVMKKLISIRNGKGEVDDIDHLGNRRIRSVGEMAENQFRVGLVRVERAVKERLSLGDLDNVMPQDLINAKPISAAVKEFFGSSQLSQFMDQNNPLSEVTHKRRISALGPGGLTRERAGFEVRDVHVTHYGRLCPIETPEGPNIGLINSLSAFARCNEYGFLETPYRRVVNGVVTDEVDYLSAIEEGQFVIAQANAKLTEEGGFADELVTARQKGESGLHPREHVDYMDVATNQVVSIAASLIPFLEHDDANRALMGANMQRQAVPTLRSEKPLVGTGIERNVAVDSGVTAVAKRGGVIQSVDASRIVVKVNEEELIPGEAGIDIYNLTKYTRSNQNTCINQRPCVMPGEPVARGDVLADGPSTDLGELALGQNMRIAFMPWNGYNFEDSILVSERVVQDDRFTTIHIQELSCVARDTKLGAEEITADIPNVGEAALSKLDESGIVYIGAEVKGGDILVGKVTPKGETQLTPEEKLLRAIFGEKASDVKDTSLRVPNSVAGTVIDVQVFTRDGVEKDKRALEIEQMQLKEAKKDLTEEFQILEGGLLARVRSVLLAGGYTEAKLGSIERKKWLEQTLENEELQNQLEQLAEQYDELKADFDKKFEAKRRKITQGDDLAPGVLKIVKVYLAVKRRIQPGDKMAGRHGNKGVISKINPVEDMPYDENGQPVDIVLNPLGVPSRMNIGQILEVHLGLAAKGIGDKINQMIKEQQELAKLREFLQKVYDLGDTRQRVDISELSDEDVRTLAHNLRAGLPVATPVFDGAPESSIKAMLELADLPASGQLTLFDGRTGDAFERPVTVGYMYMLKLNHLVDDKMHARSTGSYSLVTQQPLGGKAQFGGQRFGEMEVWALEAYGAAYTLQEMLTVKSDDVNGRTKMYKNIVDGNHAMEPGMPESFNVLLKEIRSLGINIELEDE.

This sequence belongs to the RNA polymerase beta chain family. As to quaternary structure, the RNAP catalytic core consists of 2 alpha, 1 beta, 1 beta' and 1 omega subunit. When a sigma factor is associated with the core the holoenzyme is formed, which can initiate transcription.

It carries out the reaction RNA(n) + a ribonucleoside 5'-triphosphate = RNA(n+1) + diphosphate. Functionally, DNA-dependent RNA polymerase catalyzes the transcription of DNA into RNA using the four ribonucleoside triphosphates as substrates. This is DNA-directed RNA polymerase subunit beta from Vibrio cholerae serotype O1 (strain ATCC 39315 / El Tor Inaba N16961).